We begin with the raw amino-acid sequence, 139 residues long: Large ribosomal subunit protein uL16 (139 aa).

Belongs to the universal ribosomal protein uL16 family. As to quaternary structure, part of the 50S ribosomal subunit.

Binds 23S rRNA and is also seen to make contacts with the A and possibly P site tRNAs. The polypeptide is Large ribosomal subunit protein uL16 (Picosynechococcus sp. (strain ATCC 27264 / PCC 7002 / PR-6) (Agmenellum quadruplicatum)).